We begin with the raw amino-acid sequence, 213 residues long: Mediator of RNA polymerase II transcription subunit 7 (213 aa).

The interval Thr-96–Glu-120 is disordered. Residues Glu-97–Glu-120 show a composition bias toward polar residues.

The protein belongs to the Mediator complex subunit 7 family. In terms of assembly, component of the Mediator complex.

It is found in the nucleus. Its function is as follows. Component of the Mediator complex, a coactivator involved in the regulated transcription of nearly all RNA polymerase II-dependent genes. Mediator functions as a bridge to convey information from gene-specific regulatory proteins to the basal RNA polymerase II transcription machinery. Mediator is recruited to promoters by direct interactions with regulatory proteins and serves as a scaffold for the assembly of a functional preinitiation complex with RNA polymerase II and the general transcription factors. This chain is Mediator of RNA polymerase II transcription subunit 7 (MED7), found in Kluyveromyces lactis (strain ATCC 8585 / CBS 2359 / DSM 70799 / NBRC 1267 / NRRL Y-1140 / WM37) (Yeast).